Consider the following 289-residue polypeptide: Light-independent protochlorophyllide reductase iron-sulfur ATP-binding protein (289 aa).

ATP-binding positions include 10 to 15 and lysine 39; that span reads GIGKST. Serine 14 lines the Mg(2+) pocket. Residues cysteine 95 and cysteine 129 each contribute to the [4Fe-4S] cluster site. Residue 180-181 coordinates ATP; sequence NR.

This sequence belongs to the NifH/BchL/ChlL family. In terms of assembly, homodimer. Protochlorophyllide reductase is composed of three subunits; ChlL, ChlN and ChlB. Requires [4Fe-4S] cluster as cofactor.

Its subcellular location is the plastid. The protein localises to the chloroplast. It carries out the reaction chlorophyllide a + oxidized 2[4Fe-4S]-[ferredoxin] + 2 ADP + 2 phosphate = protochlorophyllide a + reduced 2[4Fe-4S]-[ferredoxin] + 2 ATP + 2 H2O. Its pathway is porphyrin-containing compound metabolism; chlorophyll biosynthesis (light-independent). In terms of biological role, component of the dark-operative protochlorophyllide reductase (DPOR) that uses Mg-ATP and reduced ferredoxin to reduce ring D of protochlorophyllide (Pchlide) to form chlorophyllide a (Chlide). This reaction is light-independent. The L component serves as a unique electron donor to the NB-component of the complex, and binds Mg-ATP. The sequence is that of Light-independent protochlorophyllide reductase iron-sulfur ATP-binding protein from Marchantia polymorpha (Common liverwort).